Reading from the N-terminus, the 197-residue chain is Peptide deformylase (197 aa).

Residues cysteine 106 and histidine 148 each coordinate Fe cation. Residue glutamate 149 is part of the active site. Histidine 152 is a binding site for Fe cation.

This sequence belongs to the polypeptide deformylase family. It depends on Fe(2+) as a cofactor.

It catalyses the reaction N-terminal N-formyl-L-methionyl-[peptide] + H2O = N-terminal L-methionyl-[peptide] + formate. In terms of biological role, removes the formyl group from the N-terminal Met of newly synthesized proteins. Requires at least a dipeptide for an efficient rate of reaction. N-terminal L-methionine is a prerequisite for activity but the enzyme has broad specificity at other positions. The polypeptide is Peptide deformylase (Mycobacterium leprae (strain TN)).